The primary structure comprises 688 residues: Zinc finger protein 770 (688 aa).

K11 participates in a covalent cross-link: Glycyl lysine isopeptide (Lys-Gly) (interchain with G-Cter in SUMO2). C2H2-type zinc fingers lie at residues 27-49 (YVCN…YLIH), 55-77 (FECD…QLTH), and 81-103 (FKCS…QQLH). Glycyl lysine isopeptide (Lys-Gly) (interchain with G-Cter in SUMO2) cross-links involve residues K112, K121, and K146. C2H2-type zinc fingers lie at residues 160–182 (HACT…VLIH), 188–210 (FKCV…QLTH), and 216–238 (FQCC…KQIH). K262 is covalently cross-linked (Glycyl lysine isopeptide (Lys-Gly) (interchain with G-Cter in SUMO2)). A C2H2-type 7; degenerate zinc finger spans residues 294–318 (FQCPKCEKCFESEQILNEHSCFPAR). Residues K420 and K437 each participate in a glycyl lysine isopeptide (Lys-Gly) (interchain with G-Cter in SUMO2) cross-link. C2H2-type zinc fingers lie at residues 475–497 (CPCD…YLIH), 503–525 (FGCN…EQTH), 623–645 (YRCS…YLIH), and 651–673 (FECS…QLTH). Residue K681 forms a Glycyl lysine isopeptide (Lys-Gly) (interchain with G-Cter in SUMO2) linkage.

It belongs to the krueppel C2H2-type zinc-finger protein family.

It is found in the nucleus. In terms of biological role, may be involved in transcriptional regulation. In Pongo abelii (Sumatran orangutan), this protein is Zinc finger protein 770 (ZNF770).